Here is a 289-residue protein sequence, read N- to C-terminus: MNIDGYTRLAAVVAKPIKHSISPFIHNLAFKETGVNGVYVAWEIPEEDLAVTLENIKRYDMFGINLSMPYKQAVIPYLDSLTDSARLIGAVNTVIHQDGLLIGHNTDGIGFFKSLEKLRGFQVRNKRLTILGGGGASTAIIAQATLDGAKEITIFCRQQSLERTQASLTPIARATGVPMQILALDDSQLLQEHITNSDLLVNGTSVGMDGYSQPVPSTIRFPENLLVADVIYQPFETPLLKLAQSQGNPTINGLGMLLFQAAEAFQSWTGQEMPTDLIWDQLVQKYDIK.

Residues 20-22 (SIS) and Ser67 each bind shikimate. Residue Lys71 is the Proton acceptor of the active site. Residue Asp83 coordinates NADP(+). Residues Asn92 and Asp107 each coordinate shikimate. NADP(+) is bound by residues 132 to 136 (GGGGA) and Val230. Tyr232 contacts shikimate. An NADP(+)-binding site is contributed by Gly253.

It belongs to the shikimate dehydrogenase family. In terms of assembly, homodimer.

The catalysed reaction is shikimate + NADP(+) = 3-dehydroshikimate + NADPH + H(+). It functions in the pathway metabolic intermediate biosynthesis; chorismate biosynthesis; chorismate from D-erythrose 4-phosphate and phosphoenolpyruvate: step 4/7. Its function is as follows. Involved in the biosynthesis of the chorismate, which leads to the biosynthesis of aromatic amino acids. Catalyzes the reversible NADPH linked reduction of 3-dehydroshikimate (DHSA) to yield shikimate (SA). The protein is Shikimate dehydrogenase (NADP(+)) of Streptococcus suis (strain 98HAH33).